An 806-amino-acid polypeptide reads, in one-letter code: Lon protease (806 aa).

In terms of domain architecture, Lon N-terminal spans 14-207; the sequence is YPVLPLRDIV…KALGFMEGEI (194 aa). 359–366 provides a ligand contact to ATP; sequence GPPGVGKT. The Lon proteolytic domain maps to 594–775; that stretch reads DDQVGVVTGL…GEVIAHALLR (182 aa). Residues serine 681 and lysine 724 contribute to the active site. The segment at 786–806 is disordered; that stretch reads SQPAALPSVDSQDEAGTSIAH.

The protein belongs to the peptidase S16 family. As to quaternary structure, homohexamer. Organized in a ring with a central cavity.

It is found in the cytoplasm. The catalysed reaction is Hydrolysis of proteins in presence of ATP.. Its function is as follows. ATP-dependent serine protease that mediates the selective degradation of mutant and abnormal proteins as well as certain short-lived regulatory proteins. Required for cellular homeostasis and for survival from DNA damage and developmental changes induced by stress. Degrades polypeptides processively to yield small peptide fragments that are 5 to 10 amino acids long. Binds to DNA in a double-stranded, site-specific manner. In R.meliloti it is important for controlling the turnover of a constitutively expressed protein(s) that, when unregulated, disrupts normal nodule formation and normal growth. The sequence is that of Lon protease from Rhizobium meliloti (strain 1021) (Ensifer meliloti).